Consider the following 237-residue polypeptide: Urease subunit alpha (237 aa).

The tract at residues 1–102 (MKLTPKELDK…LVTIHTPVED (102 aa)) is urease gamma. The interval 103-237 (NGKLAPGEVF…CGCEATKDKQ (135 aa)) is urease beta.

The protein in the N-terminal section; belongs to the urease gamma subunit family. This sequence in the C-terminal section; belongs to the urease beta subunit family. As to quaternary structure, heterohexamer of 3 UreA (alpha) and 3 UreB (beta) subunits.

Its subcellular location is the cytoplasm. It catalyses the reaction urea + 2 H2O + H(+) = hydrogencarbonate + 2 NH4(+). The protein operates within nitrogen metabolism; urea degradation; CO(2) and NH(3) from urea (urease route): step 1/1. The chain is Urease subunit alpha from Helicobacter felis.